A 275-amino-acid chain; its full sequence is Autophagy protein 5 (275 aa).

An N-acetylmethionine modification is found at methionine 1. Lysine 130 participates in a covalent cross-link: Glycyl lysine isopeptide (Lys-Gly) (interchain with G-Cter in ATG12).

This sequence belongs to the ATG5 family. Forms a conjugate with ATG12. Part of the minor complex composed of 4 sets of ATG12-ATG5 and ATG16L1 (400 kDa); this complex interacts with ATG3 leading to disruption of ATG7 interaction and promotion of ATG8-like proteins lipidation. Forms an 800-kDa complex composed of ATG12-ATG5 and ATG16L2. The ATG12-ATG5 conjugate interacts with RAB33A; this interaction is bridged by ATG16L1 and promotes ATG12-ATG5-ATG16L1 complex recruitment to phagophores. Interacts with TECPR1; the interaction is direct and does not take place when ATG16L1 is associated with the ATG5-ATG12 conjugate. Interacts with DHX58/RIG-1, IFIH1/MDA5 and MAVS/IPS-1 in monomeric form as well as in ATG12-ATG5 conjugate form. The interaction with MAVS is further enhanced upon vesicular stomatitis virus (VSV) infection. Interacts with ATG3. Interacts with ATG7 and ATG10. Interacts with FADD. Interacts with Bassoon/BSN; this interaction is important for the regulation of presynaptic autophagy. Interacts with ATG16L2. Conjugated to ATG12; which is essential for autophagy, but is not required for association with isolation membrane. In terms of processing, acetylated by EP300. As to expression, ubiquitous.

It localises to the cytoplasm. Its subcellular location is the preautophagosomal structure membrane. Its function is as follows. Involved in autophagic vesicle formation. Conjugation with ATG12, through a ubiquitin-like conjugating system involving ATG7 as an E1-like activating enzyme and ATG10 as an E2-like conjugating enzyme, is essential for its function. The ATG12-ATG5 conjugate acts as an E3-like enzyme which is required for lipidation of ATG8 family proteins and their association to the vesicle membranes. Involved in mitochondrial quality control after oxidative damage, and in subsequent cellular longevity. Plays a critical role in multiple aspects of lymphocyte development and is essential for both B and T lymphocyte survival and proliferation. Required for optimal processing and presentation of antigens for MHC II. Involved in the maintenance of axon morphology and membrane structures, as well as in normal adipocyte differentiation. Promotes primary ciliogenesis through removal of OFD1 from centriolar satellites and degradation of IFT20 via the autophagic pathway. As part of the ATG8 conjugation system with ATG12 and ATG16L1, required for recruitment of LRRK2 to stressed lysosomes and induction of LRRK2 kinase activity in response to lysosomal stress. Functionally, may play an important role in the apoptotic process, possibly within the modified cytoskeleton. Its expression is a relatively late event in the apoptotic process, occurring downstream of caspase activity. Plays a crucial role in IFN-gamma-induced autophagic cell death by interacting with FADD. (Microbial infection) May act as a proviral factor. In association with ATG12, negatively regulates the innate antiviral immune response by impairing the type I IFN production pathway upon vesicular stomatitis virus (VSV) infection. The polypeptide is Autophagy protein 5 (Mus musculus (Mouse)).